Here is a 795-residue protein sequence, read N- to C-terminus: ATP-dependent RNA helicase DHX15 (795 aa).

Residues 1 to 108 (MSKRHRLDLG…HSTHAGHAGH (108 aa)) form a disordered region. At Ser15 the chain carries Phosphoserine. Over residues 20–62 (AGTDGKDRDRDRDREDRSKDRDRERDRGDREREREKEKEKELR) the composition is skewed to basic and acidic residues. The span at 79–108 (ASHSAHSTHSAHSAHSTHSAHSTHAGHAGH) shows a compositional bias: low complexity. Residues 147–313 (TDILVRHQSF…FDNCPLLTIP (167 aa)) form the Helicase ATP-binding domain. 160–167 (GETGSGKT) contacts ATP. Residues 260-263 (DEAH) carry the DEAH box motif. In terms of domain architecture, Helicase C-terminal spans 338-518 (TVIQIHMCEE…SVVLQLKKLG (181 aa)). An N6-acetyllysine modification is found at Lys488. Lys786 is covalently cross-linked (Glycyl lysine isopeptide (Lys-Gly) (interchain with G-Cter in SUMO2)).

This sequence belongs to the DEAD box helicase family. DEAH subfamily. DDX15/PRP43 sub-subfamily. As to quaternary structure, component of the U11/U12 snRNPs that are part of the U12-type spliceosome. Identified in the Intron Large spliceosome complex (IL, also named intron lariat spliceosome), a post-mRNA release spliceosomal complex containing the excised intron, U2, U5 and U6 snRNPs, and splicing factors; the association may be transient. The IL complex exists in two distinct conformations, one with the DHX15 (ILS2) and one without (ILS1). Interacts with TFIP11 (via G-patch domain); indicative for a recruitment to the IL complex. Interacts with SSB/La. Interacts with GPATCH2 (via G-patch domain); promoting the RNA helicase activity. Interacts with NKRF (via G-patch domain); promoting the RNA helicase activity. Interacts with NLRP6.

The protein resides in the nucleus. The protein localises to the nucleolus. It carries out the reaction ATP + H2O = ADP + phosphate + H(+). Its activity is regulated as follows. ATPase activity is enhanced upon binding to G-patch domain-containing proteins. G-patch domain-containing proteins act like a brace that tethers mobile sections of DHX15 together, stabilizing a functional conformation with high RNA affinity, thereby promoting the ATPase activity. Its function is as follows. RNA helicase involved in mRNA processing and antiviral innate immunity. Pre-mRNA processing factor involved in disassembly of spliceosomes after the release of mature mRNA. In cooperation with TFIP11 seem to be involved in the transition of the U2, U5 and U6 snRNP-containing IL complex to the snRNP-free IS complex leading to efficient debranching and turnover of excised introns. Plays a key role in antiviral innate immunity by promoting both MAVS-dependent signaling and NLRP6 inflammasome. Acts as an RNA virus sensor: recognizes and binds viral double stranded RNA (dsRNA) and activates the MAVS-dependent signaling to produce interferon-beta and interferon lambda-3 (IFNL3). Involved in intestinal antiviral innate immunity together with NLRP6: recognizes and binds viral dsRNA and promotes activation of the NLRP6 inflammasome in intestinal epithelial cells to restrict infection by enteric viruses. The NLRP6 inflammasome acts by promoting maturation and secretion of IL18 in the extracellular milieu. Also involved in antibacterial innate immunity by promoting Wnt-induced antimicrobial protein expression in Paneth cells. This chain is ATP-dependent RNA helicase DHX15, found in Pongo abelii (Sumatran orangutan).